The sequence spans 119 residues: MQRIMLRAKIHRAKVTQADLHYEGSCGIDADLLEAADIKVGEKIELYNINNGERFSTYAIQGARGSGEISLNGAAARCAHLGDLMIICTYGPMTDEEIATYTPKIVFVDEDNHFAGMKK.

Ser25 serves as the catalytic Schiff-base intermediate with substrate; via pyruvic acid. Ser25 carries the pyruvic acid (Ser) modification. Thr57 is a substrate binding site. Tyr58 serves as the catalytic Proton donor. Residue 73 to 75 (GAA) coordinates substrate.

This sequence belongs to the PanD family. Heterooctamer of four alpha and four beta subunits. The cofactor is pyruvate. Post-translationally, is synthesized initially as an inactive proenzyme, which is activated by self-cleavage at a specific serine bond to produce a beta-subunit with a hydroxyl group at its C-terminus and an alpha-subunit with a pyruvoyl group at its N-terminus.

Its subcellular location is the cytoplasm. It carries out the reaction L-aspartate + H(+) = beta-alanine + CO2. The protein operates within cofactor biosynthesis; (R)-pantothenate biosynthesis; beta-alanine from L-aspartate: step 1/1. In terms of biological role, catalyzes the pyruvoyl-dependent decarboxylation of aspartate to produce beta-alanine. In Herminiimonas arsenicoxydans, this protein is Aspartate 1-decarboxylase.